The sequence spans 121 residues: Urotensin-2 (121 aa).

An N-terminal signal peptide occupies residues 1-19 (MSKLVPCLLLLGCLGLLFA). A propeptide spanning residues 20–106 (LPVPDSRKEP…HLLARIKKPY (87 aa)) is cleaved from the precursor. A disulfide bond links C115 and C120.

Belongs to the urotensin-2 family.

It localises to the secreted. Functionally, highly potent vasoconstrictor. The sequence is that of Urotensin-2 (UTS2) from Sus scrofa (Pig).